The chain runs to 220 residues: MATVKGLLKGLRYITQIFDEEKDKDMQIGFPTDVKHVAHIGSDGPATNVPSWMGDFKPQENENGQVVSRADANNNQIGEGVGLQELLPPTDKPKHKKTRRKSETVSQNGSPPRRNSSASASDMQPKNTRRHHRSRHGSIDSSNDPSVRRRRVVSVTTNDMEGSYPLSDSSTHSRKSTSRHRKPKGSGGGELSMKKTKGKTENPIVESVDTCNDNNISDKE.

Residues Ile28 to Gly41 enclose the CRIB domain. The tract at residues His39 to Glu220 is disordered. The segment covering Asn61 to Ile77 has biased composition (polar residues). Low complexity predominate over residues Asn108–Ser121. Basic residues-rich tracts occupy residues Asn127–His136 and His172–Lys184. Polar residues predominate over residues Asp209–Glu220.

In terms of assembly, interacts with ARAC11/ROP1. As to expression, expressed in flowers and pollen.

It localises to the cytoplasm. Its function is as follows. Functions as a downstream effector of Rho-related GTP binding proteins of the 'Rho of Plants' (ROPs) family. Participates in the propagation of ROP GTPase signals in specific cellular responses. Functions as a downstream effector of ARAC11/ROP1 to activate calcium signaling that leads to F-actin disassembly associated with exocytosis in the tip of the growing pollen tube. Counteracts the ARAC11/ROP1-RIC4 pathway, which promotes apical F-actin assembly associated with vesicle accumulation, to control actin dynamics and pollen tube apical growth. The polypeptide is CRIB domain-containing protein RIC3 (RIC3) (Arabidopsis thaliana (Mouse-ear cress)).